A 508-amino-acid polypeptide reads, in one-letter code: Ribonuclease Y (508 aa).

Residues 1–21 form a helical membrane-spanning segment; the sequence is MMLWYIVAGAGGLLIGYLIAN. In terms of domain architecture, KH spans 198–283; that stretch reads TVSTVSLPSD…EMYEKAKQEV (86 aa). An HD domain is found at 324–417; sequence VLNHSIEVAL…VAAADALSAA (94 aa).

It belongs to the RNase Y family.

It is found in the cell membrane. Its function is as follows. Endoribonuclease that initiates mRNA decay. The protein is Ribonuclease Y of Thermotoga maritima (strain ATCC 43589 / DSM 3109 / JCM 10099 / NBRC 100826 / MSB8).